The sequence spans 286 residues: MASPGILEESSSGDVCSGGCPDQWEEKTEEELQCQFEQAAKHVQNVASVASTEQLLYLYARYKQVKVGRCNTPKPGFFDYEGKKKWEAWKALGDYSHQQAMTEYIETVKKLDPDWSPQALEEPYKEPKTTFGGPVVSCLYKVQETLREEDKDIFDYCRENNHSRVSHALSTGSVDVNVADDEGRSLLHWACDRGHTQLVSVILFHNAHINMQDSEGQTPLHYASACEFPDIVDLLLDHGADPSLVDNDGFQPHEVTDSKTIAAMLQQHASNGEHNKPPSLLLEMPQ.

Positions 32–117 (LQCQFEQAAK…VKKLDPDWSP (86 aa)) constitute an ACB domain. An acyl-CoA is bound by residues 59-63 (YARYK), K85, and Y104. ANK repeat units follow at residues 182 to 211 (EGRS…HINM) and 215 to 244 (EGQT…DPSL).

It localises to the cytoplasm. It is found in the nucleus. Its function is as follows. Binds long-chain acyl-coenzyme A molecules with a strong preference for unsaturated C18:1-CoA. Does not bind fatty acids. Plays a role in protein N-myristoylation. This chain is Acyl-CoA-binding domain-containing protein 6 (acbd6), found in Xenopus laevis (African clawed frog).